A 1604-amino-acid chain; its full sequence is E3 ubiquitin-protein ligase HECW1 (1604 aa).

The C2 domain maps to 182 to 318 (SAAPIFKGIG…LERHAIGDRV (137 aa)). Disordered stretches follow at residues 350 to 539 (DEEI…CSLP), 572 to 604 (PSAQRGSTTEEEDGLEEESTLKESSEKDGLSEV), 642 to 667 (GIGAGQDGEAHPSTGSESDSSPQQGA), and 727 to 826 (STVF…TIDE). The span at 362–380 (SAETQDSIMNSMVGNSNGE) shows a compositional bias: polar residues. Basic and acidic residues predominate over residues 387–396 (EFCKDAKPES). Positions 398–412 (SEGNGVNSSENQNQE) are enriched in polar residues. 2 stretches are compositionally biased toward acidic residues: residues 435 to 444 (APEEPGELQD) and 458 to 469 (EVAEGLPLDEDS). The segment covering 494–505 (GAREEEMQKGKD) has biased composition (basic and acidic residues). The span at 580-589 (TEEEDGLEEE) shows a compositional bias: acidic residues. Positions 590 to 601 (STLKESSEKDGL) are enriched in basic and acidic residues. 3 stretches are compositionally biased toward polar residues: residues 654-667 (STGSESDSSPQQGA), 748-762 (DSVQSPELDPESTNG), and 803-812 (HNSQPISQLP). One can recognise a WW 1 domain in the interval 826–859 (EPLPPNWEARIDSHGRVFYVDHINRTTTWQRPSM). Ser-871 bears the Phosphoserine mark. Residues 871–898 (SVHQMEQLNRRYQNIQRTMATERAEEDS) adopt a coiled-coil conformation. The interval 890–936 (ATERAEEDSGNQNSEQIPDGGGGGGGGSDSEAESSQSSLDLRREGSL) is disordered. The segment covering 908 to 917 (DGGGGGGGGS) has biased composition (gly residues). Residues Ser-935 and Ser-937 each carry the phosphoserine modification. Residues 1016-1049 (LELPRGWEIKTDHQGKSFFVDHNSRATTFIDPRI) enclose the WW 2 domain. The HECT domain maps to 1269-1604 (SRKELQRNKL…VEETSTFGLE (336 aa)). The active-site Glycyl thioester intermediate is the Cys-1572.

As to quaternary structure, interacts with DVL1 and SSR3. Predominantly expressed in neurons of the spinal cord.

The protein localises to the cytoplasm. The enzyme catalyses S-ubiquitinyl-[E2 ubiquitin-conjugating enzyme]-L-cysteine + [acceptor protein]-L-lysine = [E2 ubiquitin-conjugating enzyme]-L-cysteine + N(6)-ubiquitinyl-[acceptor protein]-L-lysine.. Its pathway is protein modification; protein ubiquitination. E3 ubiquitin-protein ligase that mediates ubiquitination and subsequent degradation of DVL1. The polypeptide is E3 ubiquitin-protein ligase HECW1 (Hecw1) (Mus musculus (Mouse)).